A 147-amino-acid polypeptide reads, in one-letter code: TRAF-interacting protein with FHA domain-containing protein B (147 aa).

The FHA domain occupies 36–108; the sequence is LLVGRGQDTH…LHSVNRISFS (73 aa).

As to quaternary structure, interacts with TIFA.

Functionally, inhibits TIFA-mediated TRAF6 activation possibly by inducing a conformational change in TIFA. This is TRAF-interacting protein with FHA domain-containing protein B from Rattus norvegicus (Rat).